A 790-amino-acid polypeptide reads, in one-letter code: Tumor necrosis factor alpha-induced protein 3 (790 aa).

A2 carries the post-translational modification N-acetylalanine. A TRAF-binding region spans residues 58 to 300; that stretch reads PQFREIIHKA…LTDPENEMKE (243 aa). In terms of domain architecture, OTU spans 92 to 263; that stretch reads LVALKTNGDG…SHHFVPLVTL (172 aa). The active site involves D100. C103 serves as the catalytic Nucleophile. 3 interaction with ubiquitin regions span residues 157-159, 190-192, and 224-227; these read LCY, SLE, and FAPL. The active-site Proton acceptor is the H256. The tract at residues 369-775 is interaction with TNIP1; sequence AQNPMESSLP…ACDHFGNAKC (407 aa). The A20-type 1 zinc finger occupies 381 to 416; sequence SLMDVKCETPNCPFFMSVNTQPLCHECSERRQKNQN. The interaction with RIPK1 stretch occupies residues 386-453; it reads KCETPNCPFF…EPLAWNPEEP (68 aa). The Zn(2+) site is built by C387, C392, C404, and C407. The interval 415–467 is disordered; the sequence is QNKLPKLNSKPGPEGLPGMALGASRGEAYEPLAWNPEEPTGGPHSAPPTAPSP. S459 is modified (phosphoserine). 2 consecutive A20-type zinc fingers follow at residues 472–507 and 515–548; these read ETTAMKCRSPGCPFTLNVQHNGFCERCHNARQLHAS and HLDPGKCQACLQDVTRTFNGICSTCFKRTTAEAS. 8 residues coordinate Zn(2+): C478, C483, C495, C498, C521, C524, C536, and C539. The interval 550–580 is disordered; the sequence is SLSTSLPPSCHQRSKSDPSQLVRSPSPHSCH. Positions 566–576 are enriched in polar residues; the sequence is DPSQLVRSPSP. S575 is subject to Phosphoserine. Residues 601-636 form an A20-type 4 zinc finger; it reads RTGTSKCRKAGCMYFGTPENKGFCTLCFIEYRENKH. Residues 605–655 are required for proteasomal degradation of UBE2N and UBE2D3, TRAF6 deubiquitination, and TAX1BP1 interaction with UBE2N; it reads SKCRKAGCMYFGTPENKGFCTLCFIEYRENKHLVAASGKASPTASRFQNTI. Residues 606–790 are sufficient for inhibitory activity of TNF-induced NF-kappa-B activity; that stretch reads KCRKAGCMYF…ECFQFKQMYG (185 aa). 4 residues coordinate Zn(2+): C607, C612, C624, and C627. S645 is subject to Phosphoserine. The A20-type 5 zinc-finger motif lies at 651–686; that stretch reads FQNTIPCLGRECGTLGSTMFEGYCQKCFIEAQNQRF. Positions 657, 662, 674, and 677 each coordinate Zn(2+). The segment covering 689–705 has biased composition (basic and acidic residues); that stretch reads AKRTEEQLRSSQRRDVP. The disordered stretch occupies residues 689 to 712; it reads AKRTEEQLRSSQRRDVPRTTQSTS. Residues 697 to 790 form a required for lysosomal localization and for TRAF2 lysosomal degradation region; the sequence is RSSQRRDVPR…ECFQFKQMYG (94 aa). 2 consecutive A20-type zinc fingers follow at residues 710–745 and 756–790; these read STSRPKCARASCKNILACRSEELCMECQHPNPRMGP and DPPKQRCWAPACDHFGNAKCNGYCNECFQFKQMYG. Zn(2+)-binding residues include C716, C721, C733, C736, C762, C767, C779, and C782.

Belongs to the peptidase C64 family. In terms of assembly, homodimer. Interacts with TNIP1, TAX1BP1 and TRAF2. Interacts with RNF11, ITCH and TAX1BP1 only after TNF stimulation; these interaction are transient and they are lost after 1 hour of stimulation with TNF. Interacts with YWHAZ and YWHAH. Interacts with IKBKG; the interaction is induced by TNF stimulation and by polyubiquitin. Interacts with RIPK1. Interacts with UBE2N; the interaction requires TAX1BP1. Interacts with TRAF6. In terms of processing, proteolytically cleaved by MALT1 upon TCR stimulation; disrupts NF-kappa-B inhibitory function and results in increased IL-2 production. It is proposed that only a fraction of TNFAIP3 colocalized with TCR and CBM complex is cleaved, leaving the main TNFAIP3 pool intact.

It localises to the cytoplasm. The protein localises to the nucleus. It is found in the lysosome. The enzyme catalyses Thiol-dependent hydrolysis of ester, thioester, amide, peptide and isopeptide bonds formed by the C-terminal Gly of ubiquitin (a 76-residue protein attached to proteins as an intracellular targeting signal).. In terms of biological role, ubiquitin-editing enzyme that contains both ubiquitin ligase and deubiquitinase activities. Involved in immune and inflammatory responses signaled by cytokines, such as TNF-alpha and IL-1 beta, or pathogens via Toll-like receptors (TLRs) through terminating NF-kappa-B activity. Essential component of a ubiquitin-editing protein complex, comprising also RNF11, ITCH and TAX1BP1, that ensures the transient nature of inflammatory signaling pathways. In cooperation with TAX1BP1 promotes disassembly of E2-E3 ubiquitin protein ligase complexes in IL-1R and TNFR-1 pathways; affected are at least E3 ligases TRAF6, TRAF2 and BIRC2, and E2 ubiquitin-conjugating enzymes UBE2N and UBE2D3. In cooperation with TAX1BP1 promotes ubiquitination of UBE2N and proteasomal degradation of UBE2N and UBE2D3. Upon TNF stimulation, deubiquitinates 'Lys-63'-polyubiquitin chains on RIPK1 and catalyzes the formation of 'Lys-48'-polyubiquitin chains. This leads to RIPK1 proteasomal degradation and consequently termination of the TNF- or LPS-mediated activation of NF-kappa-B. Deubiquitinates TRAF6 probably acting on 'Lys-63'-linked polyubiquitin. Upon T-cell receptor (TCR)-mediated T-cell activation, deubiquitinates 'Lys-63'-polyubiquitin chains on MALT1 thereby mediating disassociation of the CBM (CARD11:BCL10:MALT1) and IKK complexes and preventing sustained IKK activation. Deubiquitinates NEMO/IKBKG; the function is facilitated by TNIP1 and leads to inhibition of NF-kappa-B activation. Upon stimulation by bacterial peptidoglycans, probably deubiquitinates RIPK2. Can also inhibit I-kappa-B-kinase (IKK) through a non-catalytic mechanism which involves polyubiquitin; polyubiquitin promotes association with IKBKG and prevents IKK MAP3K7-mediated phosphorylation. Targets TRAF2 for lysosomal degradation. In vitro able to deubiquitinate 'Lys-11'-, 'Lys-48'- and 'Lys-63' polyubiquitin chains. Inhibitor of programmed cell death. Has a role in the function of the lymphoid system. Required for LPS-induced production of pro-inflammatory cytokines and IFN beta in LPS-tolerized macrophages. The polypeptide is Tumor necrosis factor alpha-induced protein 3 (TNFAIP3) (Macaca fascicularis (Crab-eating macaque)).